The sequence spans 134 residues: MSSVDLDDLVEKICALDLCSAAALVEKIEEKLGFPKGGLMASVSAAGSASQGAGGAAEAEKTEFIVMFDGYAADKKIAVIKAVRECTSLGLKEAKDFVEQEGSRELIEGKKYKKAEAEEVKKKLEDAGAQVSLK.

The protein belongs to the bacterial ribosomal protein bL12 family. In terms of assembly, homodimer. Part of the ribosomal stalk of the 50S ribosomal subunit. Forms a multimeric L10(L12)X complex, where L10 forms an elongated spine to which 2 to 4 L12 dimers bind in a sequential fashion. Binds GTP-bound translation factors.

Its function is as follows. Forms part of the ribosomal stalk which helps the ribosome interact with GTP-bound translation factors. Is thus essential for accurate translation. The chain is Large ribosomal subunit protein bL12 from Anaplasma phagocytophilum (strain HZ).